Consider the following 122-residue polypeptide: Large ribosomal subunit protein uL14 (122 aa).

It belongs to the universal ribosomal protein uL14 family. Part of the 50S ribosomal subunit. Forms a cluster with proteins L3 and L19. In the 70S ribosome, L14 and L19 interact and together make contacts with the 16S rRNA in bridges B5 and B8.

In terms of biological role, binds to 23S rRNA. Forms part of two intersubunit bridges in the 70S ribosome. This Microcystis aeruginosa (strain NIES-843 / IAM M-2473) protein is Large ribosomal subunit protein uL14.